Consider the following 899-residue polypeptide: Toll-like receptor 4 (899 aa).

A signal peptide spans 1–46 (MCPLQIHVLHLIQGNQKNRKGKYVNMTRQLWYILPLLFLLCHCVTS). N-linked (GlcNAc...) asparagine glycosylation is found at Asn25, Asn75, Asn83, and Asn93. Residues 47–702 (ERRCYFSKIS…LERNCRSYTA (656 aa)) are Extracellular-facing. 7 LRR repeats span residues 83–103 (NESV…PDLP), 104–126 (RSLL…AFAR), 128–150 (QNLT…LTAG), 155–179 (LTRL…VLSD), 181–202 (VSLN…MRKI), 203–229 (HALK…YFQN), and 230–253 (VHGI…TFSY). N-linked (GlcNAc...) asparagine glycosylation is found at Asn129, Asn137, Asn146, and Asn168. N-linked (GlcNAc...) asparagine glycans are attached at residues Asn237, Asn256, Asn275, and Asn313. LRR repeat units follow at residues 257 to 282 (LTHL…DLKN), 313 to 336 (NTSL…VLMY), 338 to 360 (PKTL…ALET), and 363 to 386 (LVNL…IFSN). N-linked (GlcNAc...) asparagine glycosylation is found at Asn388, Asn432, and Asn463. LRR repeat units follow at residues 468–493 (HYPL…VFYD), 501–524 (LEGL…FFDY), 526–549 (TGLK…EKGE), 554–577 (LLKL…ILRN), 579–601 (ISLE…LKHI), 602–624 (KGLR…VMRE), and 631–654 (SSNL…HFLR). The N-linked (GlcNAc...) asparagine glycan is linked to Asn516. Residues Asn633, Asn637, and Asn668 are each glycosylated (N-linked (GlcNAc...) asparagine). The helical transmembrane segment at 703–723 (VIVLFSCVFVILLTVIVCGVV) threads the bilayer. At 724-899 (YRYRWKLRYL…WRKLRDPISM (176 aa)) the chain is on the cytoplasmic side. Positions 756–897 (YEFDAFISYA…IFWRKLRDPI (142 aa)) constitute a TIR domain.

The protein belongs to the Toll-like receptor family. As to expression, expressed in all tissues tested. The highest expression is in the hepatopancreas, with moderate expression in the gills, and low expression in the gonads, adductor muscle, hemocytes, and mantle.

Its subcellular location is the cell membrane. May be involved in the innate immune response. This chain is Toll-like receptor 4, found in Pinctada imbricata (Atlantic pearl-oyster).